The following is a 247-amino-acid chain: Protein SODIUM POTASSIUM ROOT DEFECTIVE 3 (247 aa).

The disordered stretch occupies residues 130 to 166 (GSTGQDTVATEESEASAPKRGSSGPVEEKKKSSGSGS). Positions 167 to 235 (DQVVVLRVSL…KVKNAQFWTP (69 aa)) constitute an HMA domain. Residues Cys-180 and Cys-183 each contribute to the a metal cation site.

The protein resides in the cytoplasm. Functionally, heavy metal-associated protein involved in salt tolerance. The polypeptide is Protein SODIUM POTASSIUM ROOT DEFECTIVE 3 (Arabidopsis thaliana (Mouse-ear cress)).